Reading from the N-terminus, the 313-residue chain is MLANIIRIATRQSPLALWQARYVQQCLNHLYPDLHVELVPMVTRGDIILDTPLAKVGGKGLFVKELELALLEGRADIAVHSMKDVPVEFPDGLGLTTICERDDPRDAFVSNRYDSLEQLPEGSCVGTSSLRRQCQLRARRPDLVIRDLRGNVGTRLAKLDNGEYDAIILAVAGLKRLGLEERIRCALSPEESLPAVGQGAIGIECRLNDDRIRQLLAPLNHPATAARVQAERAMNVRLEGGCQVPIGSYAELEGDTLWLRALVGAPDGSQMIVGERRGNVSDAEQIGIALAEELLAKGASAILQAVYHESSSS.

Cysteine 242 carries the post-translational modification S-(dipyrrolylmethanemethyl)cysteine.

Belongs to the HMBS family. In terms of assembly, monomer. Requires dipyrromethane as cofactor.

It carries out the reaction 4 porphobilinogen + H2O = hydroxymethylbilane + 4 NH4(+). Its pathway is porphyrin-containing compound metabolism; protoporphyrin-IX biosynthesis; coproporphyrinogen-III from 5-aminolevulinate: step 2/4. Tetrapolymerization of the monopyrrole PBG into the hydroxymethylbilane pre-uroporphyrinogen in several discrete steps. The chain is Porphobilinogen deaminase from Pectobacterium carotovorum subsp. carotovorum (strain PC1).